The following is an 84-amino-acid chain: uncharacterized protein (84 aa).

The next 2 membrane-spanning stretches (helical) occupy residues 27–47 (INHH…LAML) and 52–72 (IGHV…FVLI).

The protein to M.tuberculosis Rv2876.

The protein localises to the cell membrane. This is an uncharacterized protein from Mycobacterium leprae (strain TN).